A 1621-amino-acid polypeptide reads, in one-letter code: ALK tyrosine kinase receptor (1621 aa).

An N-terminal signal peptide occupies residues methionine 1–alanine 18. The Extracellular portion of the chain corresponds to serine 19–serine 1042. Residues arginine 48–aspartate 70 form a heparin-binding region region. 11 N-linked (GlcNAc...) asparagine glycosylation sites follow: asparagine 174, asparagine 248, asparagine 289, asparagine 328, asparagine 415, asparagine 428, asparagine 449, asparagine 567, asparagine 575, asparagine 631, and asparagine 673. Residues leucine 268–glutamate 431 enclose the MAM 1 domain. Positions leucine 441–lysine 477 constitute an LDL-receptor class A domain. In terms of domain architecture, MAM 2 spans phenylalanine 482 to leucine 640. An intrachain disulfide couples cysteine 692 to cysteine 705. The N-linked (GlcNAc...) asparagine glycan is linked to asparagine 713. Cysteine 787 and cysteine 798 form a disulfide bridge. Residues asparagine 812, asparagine 868, and asparagine 890 are each glycosylated (N-linked (GlcNAc...) asparagine). Cysteine 910 and cysteine 932 are disulfide-bonded. The N-linked (GlcNAc...) asparagine glycan is linked to asparagine 990. Cystine bridges form between cysteine 991-cysteine 999, cysteine 994-cysteine 1010, and cysteine 1012-cysteine 1025. An EGF-like region spans residues cysteine 991–proline 1029. Residues valine 1043–tyrosine 1063 form a helical membrane-spanning segment. The Cytoplasmic portion of the chain corresponds to arginine 1064 to proline 1621. Phosphotyrosine is present on residues tyrosine 1082, tyrosine 1096, and tyrosine 1100. Residues isoleucine 1120–valine 1396 enclose the Protein kinase domain. ATP-binding positions include leucine 1126–valine 1134 and histidine 1128. Tyrosine 1135 bears the Phosphotyrosine mark. Residues lysine 1154 and glutamate 1201–methionine 1203 each bind ATP. Residue aspartate 1253 is the Proton acceptor of the active site. An ATP-binding site is contributed by aspartate 1274. A Phosphotyrosine modification is found at tyrosine 1282. The disordered stretch occupies residues glutamate 1412 to arginine 1556. Residues lysine 1414–glutamate 1423 are compositionally biased toward basic and acidic residues. The segment covering serine 1441 to glycine 1461 has biased composition (low complexity). A compositionally biased stretch (gly residues) spans alanine 1462 to alanine 1472. Residues asparagine 1506–serine 1518 show a composition bias toward polar residues. Tyrosine 1516 is modified (phosphotyrosine). Residues alanine 1543–alanine 1552 show a composition bias toward gly residues.

This sequence belongs to the protein kinase superfamily. Tyr protein kinase family. Insulin receptor subfamily. In terms of assembly, homodimer; homodimerizes following heparin- and ligand-binding. Interacts with CBL, IRS1, PIK3R1 and PLCG1. Interacts with FRS2 and SHC1. Interacts with PTN and MDK. Phosphorylated at tyrosine residues by autocatalysis, which activates kinase activity. In cells not stimulated by a ligand, receptor protein tyrosine phosphatase beta and zeta complex (PTPRB/PTPRZ1) dephosphorylates ALK at the sites in ALK that are undergoing autophosphorylation through autoactivation. In terms of tissue distribution, mainly expressed in central nervous system (CNS) and other parts of the brain such as the paraventricular nucleus (PVN) of the hypothalamus. Expression is also found in peripheral nervous systems, eye, nasal epithelium, olfactory nerve, tongue, skin, tissue surrounding the esophagus, stomach, midgut, as well as testis and ovary.

The protein localises to the cell membrane. It carries out the reaction L-tyrosyl-[protein] + ATP = O-phospho-L-tyrosyl-[protein] + ADP + H(+). With respect to regulation, activated upon ALKAL2 ligand-binding. ALKAL2-driven activation is coupled with heparin-binding. Following ligand-binding, homodimerizes and autophosphorylates, activating its kinase activity. Inactivated through dephosphorylation by receptor protein tyrosine phosphatase beta and zeta complex (PTPRB/PTPRZ1) when there is no stimulation by a ligand. Neuronal receptor tyrosine kinase that is essentially and transiently expressed in specific regions of the central and peripheral nervous systems and plays an important role in the genesis and differentiation of the nervous system. Also acts as a key thinness protein involved in the resistance to weight gain: in hypothalamic neurons, controls energy expenditure acting as a negative regulator of white adipose tissue lipolysis and sympathetic tone to fine-tune energy homeostasis. Following activation by ALKAL2 ligand at the cell surface, transduces an extracellular signal into an intracellular response. In contrast, ALKAL1 is not a potent physiological ligand for ALK. Ligand-binding to the extracellular domain induces tyrosine kinase activation, leading to activation of the mitogen-activated protein kinase (MAPK) pathway. Phosphorylates almost exclusively at the first tyrosine of the Y-x-x-x-Y-Y motif. Induces tyrosine phosphorylation of CBL, FRS2, IRS1 and SHC1, as well as of the MAP kinases MAPK1/ERK2 and MAPK3/ERK1. ALK activation may also be regulated by pleiotrophin (PTN) and midkine (MDK). PTN-binding induces MAPK pathway activation, which is important for the anti-apoptotic signaling of PTN and regulation of cell proliferation. MDK-binding induces phosphorylation of the ALK target insulin receptor substrate (IRS1), activates mitogen-activated protein kinases (MAPKs) and PI3-kinase, resulting also in cell proliferation induction. Drives NF-kappa-B activation, probably through IRS1 and the activation of the AKT serine/threonine kinase. Recruitment of IRS1 to activated ALK and the activation of NF-kappa-B are essential for the autocrine growth and survival signaling of MDK. This Mus musculus (Mouse) protein is ALK tyrosine kinase receptor.